Reading from the N-terminus, the 894-residue chain is DNA mismatch repair protein MutS (894 aa).

607–614 provides a ligand contact to ATP; it reads GPNMSGKS.

Belongs to the DNA mismatch repair MutS family.

In terms of biological role, this protein is involved in the repair of mismatches in DNA. It is possible that it carries out the mismatch recognition step. This protein has a weak ATPase activity. This Bacillus cereus (strain ZK / E33L) protein is DNA mismatch repair protein MutS.